A 300-amino-acid polypeptide reads, in one-letter code: Homoserine kinase (300 aa).

86–96 contributes to the ATP binding site; the sequence is PVARGLGSSAT.

Belongs to the GHMP kinase family. Homoserine kinase subfamily.

The protein localises to the cytoplasm. The enzyme catalyses L-homoserine + ATP = O-phospho-L-homoserine + ADP + H(+). It functions in the pathway amino-acid biosynthesis; L-threonine biosynthesis; L-threonine from L-aspartate: step 4/5. Catalyzes the ATP-dependent phosphorylation of L-homoserine to L-homoserine phosphate. This Persephonella marina (strain DSM 14350 / EX-H1) protein is Homoserine kinase.